The chain runs to 137 residues: MAREFSRTRRIGQQLQQELAFVLQRDMKDPRIGMVTVNDVDVSRDLSHAKVYVTFFEEDPQVIEAKLAALNTAAPYARTLVAGRMKLRVMPELRFIYDASLVEGMRMSNLVSKVIRDDEAKKGHIGDEPQEGQREED.

The protein belongs to the RbfA family. In terms of assembly, monomer. Binds 30S ribosomal subunits, but not 50S ribosomal subunits or 70S ribosomes.

It is found in the cytoplasm. One of several proteins that assist in the late maturation steps of the functional core of the 30S ribosomal subunit. Associates with free 30S ribosomal subunits (but not with 30S subunits that are part of 70S ribosomes or polysomes). Required for efficient processing of 16S rRNA. May interact with the 5'-terminal helix region of 16S rRNA. The polypeptide is Ribosome-binding factor A (Shewanella amazonensis (strain ATCC BAA-1098 / SB2B)).